We begin with the raw amino-acid sequence, 349 residues long: Nuclear distribution protein nudE homolog 1 (349 aa).

A coiled-coil region spans residues Ala-23–Lys-189. The disordered stretch occupies residues Ala-182–Arg-201.

It belongs to the nudE family. As to quaternary structure, self-associates. Interacts with pafah1b1. Post-translationally, phosphorylated in mitosis.

The protein resides in the cytoplasm. It is found in the cytoskeleton. Its subcellular location is the microtubule organizing center. It localises to the centrosome. The protein localises to the spindle. The protein resides in the chromosome. It is found in the centromere. Its subcellular location is the kinetochore. It localises to the cleavage furrow. The protein localises to the cytoplasmic vesicle membrane. In terms of biological role, required for centrosome duplication and formation and function of the mitotic spindle. In Xenopus tropicalis (Western clawed frog), this protein is Nuclear distribution protein nudE homolog 1 (nde1).